The following is a 322-amino-acid chain: MYSHLSFMDKVKLEQLLLSKIFLKKNGEQNISAIAKYLNRHRSTILREIKRFKTIDEYSAYKSDKMYYEKRKKNNKRFKFTEEQLNFIHLRFNVYHDSPSELIYRYFLKFKVKFPVCVKTLYKWIRLGFYGFLKQNLRHHGKKYKRKGKSDNRGKLTDFKSIWDIDNKVSNVGWLEMDTVVGKDHKSAILVLVEQLSKKYFAIKLENHTAREVEKKFKDIIIKNNLIGKIKGIITDRRKEFSKWREMEIFAETQVYFCDAGSPQQKPLIEYMNSELRHWFPKGTDFNKVSQKQIDWVVNVINDKLRPCLNWISSKEMFLQNI.

The Integrase catalytic domain occupies 153 to 322 (RGKLTDFKSI…SSKEMFLQNI (170 aa)).

This sequence belongs to the plectrovirus integrase ORF3 family.

Its function is as follows. This protein may encode an integrase, which is necessary for integration of the viral DNA into host genome. This chain is Putative integrase ORF3, found in Spiroplasma virus SpV1-R8A2 B (SpV1).